Consider the following 328-residue polypeptide: MTRLAIALGDPAGIGAEVVLKALAHRPSLNPLLVGCRQWLQASYEQLLPCCHEPLADPSQLEILDEPLTEAITPGSISAAAGAASFGWLTRATEAVLDGRAQALVTAPIAKTAWHQAGHHYPGQTERLAELCGCDDAAMLFTARSPQSGWRFNTLLATTHIPLSSVPAALTPERLERRLGQLEDFCRRFRQRPRLRVAGLNPHAGEAGQLGTEEQRWITACLQAYQQRHNNLQLEGPVPPDTCWLGAAQAWNDSQHVEEGCDGYLALYHDQGLIPVKVLAFDQAVNTTLGLPFLRTSPDHGTGFDRAGQGSARGASMLAAIDTAVELG.

Thr-125 contributes to the substrate binding site. Residues His-160, His-203, and His-269 each coordinate a divalent metal cation. Lys-277, Asn-286, and Arg-295 together coordinate substrate.

Belongs to the PdxA family. As to quaternary structure, homodimer. Requires a divalent metal cation as cofactor.

The protein localises to the cytoplasm. It catalyses the reaction 4-(phosphooxy)-L-threonine + NAD(+) = 3-amino-2-oxopropyl phosphate + CO2 + NADH. The protein operates within cofactor biosynthesis; pyridoxine 5'-phosphate biosynthesis; pyridoxine 5'-phosphate from D-erythrose 4-phosphate: step 4/5. Its function is as follows. Catalyzes the NAD(P)-dependent oxidation of 4-(phosphooxy)-L-threonine (HTP) into 2-amino-3-oxo-4-(phosphooxy)butyric acid which spontaneously decarboxylates to form 3-amino-2-oxopropyl phosphate (AHAP). The polypeptide is 4-hydroxythreonine-4-phosphate dehydrogenase (Synechococcus sp. (strain RCC307)).